We begin with the raw amino-acid sequence, 165 residues long: MGLLSILRKLKSAPDQEVRILLLGLDNAGKTTLLKQLASEDISHITPTQGFNIKSVQSQGFKLNVWDIGGQRKIRPYWKNYFENTDILELAELLEEEKLSCVPVLIFANKQDLLTAAPASEIAEGLNLHTIRDRVWQIQSCSALTGEGVQDGMNWVCKNVNAKKK.

Residue Gly2 is the site of N-myristoyl glycine attachment. At Ser5 the chain carries Phosphoserine. Residues 24–31 (GLDNAGKT), 67–71 (DIGGQ), and 109–112 (NKQD) contribute to the GTP site.

Belongs to the small GTPase superfamily. Arf family. Found in a complex with ARL3, RP2 and UNC119 (or UNC119B); RP2 induces hydrolysis of GTP ARL3 in the complex, leading to the release of UNC119 (or UNC119B). Interacts with RP2; interaction is direct and stimulated with the activated GTP-bound form of ARL3. Interacts with SYS1. Interacts with ARL2BP; the GTP-bound form interacts with ARL2BP. Microtubule-associated protein. Does not interact with TBCC. Interacts with RP2. Interacts with PDE6D; the interaction occurs specifically with the GTP-bound form of ARL3. Interacts with GGA1; the interaction recruits PKD1:PKD2 complex to trans-Golgi network and is required for ciliary targeting of PKD1:PKD2 complex. Interacts with DNAAF9.

It localises to the golgi apparatus membrane. The protein resides in the cytoplasm. It is found in the cytoskeleton. The protein localises to the spindle. Its subcellular location is the nucleus. It localises to the microtubule organizing center. The protein resides in the centrosome. It is found in the cell projection. The protein localises to the cilium. Small GTP-binding protein which cycles between an inactive GDP-bound and an active GTP-bound form, and the rate of cycling is regulated by guanine nucleotide exchange factors (GEF) and GTPase-activating proteins (GAP). Required for normal cytokinesis and cilia signaling. Requires assistance from GTPase-activating proteins (GAPs) like RP2 and PDE6D, in order to cycle between inactive GDP-bound and active GTP-bound forms. Required for targeting proteins to the cilium, including myristoylated NPHP3 and prenylated INPP5E. Targets NPHP3 to the ciliary membrane by releasing myristoylated NPHP3 from UNC119B cargo adapter into the cilium. Required for PKD1:PKD2 complex targeting from the trans-Golgi network to the cilium. The protein is ADP-ribosylation factor-like protein 3 (ARL3) of Pongo abelii (Sumatran orangutan).